Here is a 373-residue protein sequence, read N- to C-terminus: MTAEIQQPPSQPPAQSSPMSAATDKHGGQPSVMESANCATKTKKTNAGIRRPEKPPYSYIALIVMAIQSSPTKRLTLSEIYQFLQSRFPFFRGSYQGWKNSVRHNLSLNECFIKLPKGLGRPGKGHYWTIDPASEFMFEEGSFRRRPRGFRRKCQALKPMYSMMNGLGFNHIPETYSFQGASGTIACPPNSLSLDSGIGMMNGHLPSNVDGMGLSGHPVSHIAANGGHSYMGSCTGSSGGDYSHHDSGSPLLGGGGVMEPHSVYSSPASAWAPSASTPYIKQQPLSPCNSAANPLSSSLSSHSLDQSYLHQNSHNTASELQGIPRYHSQSPSMNDRKEFVFSFNAMASSSMHSGSGSYYHQQVGYQDIKPCVM.

Residues 1–51 (MTAEIQQPPSQPPAQSSPMSAATDKHGGQPSVMESANCATKTKKTNAGIRR) form a disordered region. Low complexity predominate over residues 13-22 (PAQSSPMSAA). Positions 54–148 (KPPYSYIALI…EEGSFRRRPR (95 aa)) form a DNA-binding region, fork-head. Disordered regions lie at residues 236–255 (GSSGGDYSHHDSGSPLLGGG) and 283–306 (QPLSPCNSAANPLSSSLSSHSLDQ). Positions 286–306 (SPCNSAANPLSSSLSSHSLDQ) are enriched in low complexity.

It localises to the nucleus. In terms of biological role, probable transcription factor. Required for smooth muscle (visceral mesoderm) differentiation during gut development. Also required for normal proliferation of the lateral plate mesoderm. Acts as a downstream mediator of bmp4-signaling. This Xenopus tropicalis (Western clawed frog) protein is Forkhead box protein F1.